The following is a 192-amino-acid chain: Ion-translocating oxidoreductase complex subunit B (192 aa).

Residues 1–26 (MEMIVIAVVALTLLALLFGMLLGYAS) form a hydrophobic region. The 4Fe-4S domain maps to 32-91 (EEDPVVDQVDELLPQSQCGQCGYPGCRPYAEAVANNGEQINRCVPGGEPVMQKIATLLNV). Residues Cys-49, Cys-52, Cys-57, Cys-74, Cys-117, Cys-120, Cys-123, Cys-127, Cys-147, Cys-150, Cys-153, and Cys-157 each contribute to the [4Fe-4S] cluster site. 4Fe-4S ferredoxin-type domains are found at residues 108–137 (MLAV…GATR) and 138–167 (AMHT…LRPA).

Belongs to the 4Fe4S bacterial-type ferredoxin family. RnfB subfamily. In terms of assembly, the complex is composed of six subunits: RnfA, RnfB, RnfC, RnfD, RnfE and RnfG. [4Fe-4S] cluster is required as a cofactor.

The protein resides in the cell inner membrane. Functionally, part of a membrane-bound complex that couples electron transfer with translocation of ions across the membrane. The polypeptide is Ion-translocating oxidoreductase complex subunit B (Cronobacter sakazakii (strain ATCC BAA-894) (Enterobacter sakazakii)).